The sequence spans 552 residues: Formate--tetrahydrofolate ligase (552 aa).

65-72 (TPAGEGKT) is a binding site for ATP.

Belongs to the formate--tetrahydrofolate ligase family.

It catalyses the reaction (6S)-5,6,7,8-tetrahydrofolate + formate + ATP = (6R)-10-formyltetrahydrofolate + ADP + phosphate. Its pathway is one-carbon metabolism; tetrahydrofolate interconversion. In Fervidobacterium nodosum (strain ATCC 35602 / DSM 5306 / Rt17-B1), this protein is Formate--tetrahydrofolate ligase.